Reading from the N-terminus, the 680-residue chain is MVRRRQRLPEVDMGLVSFEDVAVDFTWQEWQELDAAQRTLYRDVMLENYRSLVWLGHCLAKPELISKLEEGFEPWGVAEATEQCLPGVRKWSAPVEKGQQSQEKYLRQVKIIKKNTPDEDKVEVENTYNVDSNCISNMTLKNEVCSRVFFQELVNPLLDVPLPTEAGERQSTEVPHDLNRTQEVLSYPKHFTHHSKDQYSQCCFQYFGPDEAFHTKAILTPEMFYVQETSRTCNNYDKSFDEVTIPAQYMTQLRKQTLGWNICHKIFPNKTELSNHDAMHTGENDDKCDYEKPIINKSLYLTKHQEAHAGIEPQAHKENIKFFCLDAELQTVDPELHGEKQVYECKVSGKTFRHQPEHISQQRPHACERACQAKEHGEAGCDEPALTQHQRLCTEEKACEGKACSKAFHHKSLLPQYQSARADEQQSDCKELMKIYFYVSSPTQHHGPPPPEKPFRCNDCLKTFSHKSQLERHQRMHTGEKPHECKECRKAFCHKSHLIRHQGIHAPEKPYECNECKKSFYLRSQLTLHERTHTGEKPFECKECRKAFSRNSHLTQHQKIHTGEKPHKCKECGNAFARKSHLIQHQKTHTGERPYECKECRKAFSRKSQLMQHETTHTGERAYECKECRKTFYLKAYLTRHQVIHQSEKPFECKKCGKAFSRKSYLTRHQKIHKGQTLSG.

Residues 16-87 (VSFEDVAVDF…AEATEQCLPG (72 aa)) enclose the KRAB domain. The C2H2-type 1; degenerate zinc finger occupies 263–280 (CHKIFPNKTELSNHDAMH). C2H2-type zinc fingers lie at residues 455–477 (FRCNDCLKTFSHKSQLERHQRMH), 483–505 (HECKECRKAFCHKSHLIRHQGIH), 511–533 (YECNECKKSFYLRSQLTLHERTH), 539–561 (FECKECRKAFSRNSHLTQHQKIH), 567–589 (HKCKECGNAFARKSHLIQHQKTH), 595–617 (YECKECRKAFSRKSQLMQHETTH), 623–645 (YECKECRKTFYLKAYLTRHQVIH), and 651–673 (FECKKCGKAFSRKSYLTRHQKIH).

Post-translationally, polyubiquitinated, leading to its degradation via the ubiquitin-proteasome pathway. Expressed during osteogenic differentiation where levels increase from the first days of differentiation and remain high during the whole process. Highly expressed in lung.

The protein localises to the nucleus. Its function is as follows. May modulate osteogenic differentiation, at least in part, through the bone morphogenetic protein (BMP) signaling pathway, increasing RUNX2 activation and leading to osteoblast commitment and maturation. In Mus musculus (Mouse), this protein is Zinc finger protein OBI1 (ObI1).